We begin with the raw amino-acid sequence, 189 residues long: RNA-binding protein (189 aa).

The C4-type zinc finger occupies 55–69 (CICPSSNHLVDDCVC). Residues 114–189 (FLTSVNPGES…DANTRKSKRK (76 aa)) are disordered. Residues 158-167 (SSSERKRKEY) show a composition bias toward basic and acidic residues. A compositionally biased stretch (low complexity) spans 168–180 (SSNSETDLSSDSD).

The protein belongs to the phytoreovirus RNA-binding protein family.

It localises to the host cytoplasm. In terms of biological role, constituent of viral factories. Binds to ssRNA and dsRNA. The chain is RNA-binding protein from Alopecurus aequalis (Barnyard grass).